Here is a 628-residue protein sequence, read N- to C-terminus: DNA ligase (628 aa).

Residues 36-40, 85-86, and E117 each bind NAD(+); these read DVEYD and SL. The active-site N6-AMP-lysine intermediate is the K119. NAD(+) is bound by residues R140, E174, K309, and K333. C427, C430, C446, and C452 together coordinate Zn(2+).

The protein belongs to the NAD-dependent DNA ligase family. LigA subfamily. Mg(2+) serves as cofactor. Requires Mn(2+) as cofactor.

The catalysed reaction is NAD(+) + (deoxyribonucleotide)n-3'-hydroxyl + 5'-phospho-(deoxyribonucleotide)m = (deoxyribonucleotide)n+m + AMP + beta-nicotinamide D-nucleotide.. Its function is as follows. DNA ligase that catalyzes the formation of phosphodiester linkages between 5'-phosphoryl and 3'-hydroxyl groups in double-stranded DNA using NAD as a coenzyme and as the energy source for the reaction. It is essential for DNA replication and repair of damaged DNA. The sequence is that of DNA ligase from Tropheryma whipplei (strain Twist) (Whipple's bacillus).